We begin with the raw amino-acid sequence, 394 residues long: 3-ketosteroid-9-alpha-monooxygenase, oxygenase component (394 aa).

Positions 27–129 (WHCLGLAKDF…TLDQDGLLFV (103 aa)) constitute a Rieske domain. [2Fe-2S] cluster-binding residues include C68, H70, C87, and H90. The Fe cation site is built by N175, H181, and H186. Y245 lines the substrate pocket. Position 305 (D305) interacts with Fe cation.

In terms of assembly, homotrimer. The two-component system 3-ketosteroid-9-alpha-monooxygenase is composed of an oxygenase component KshA and a reductase component KshB. Requires [2Fe-2S] cluster as cofactor. The cofactor is Fe cation.

It carries out the reaction androsta-1,4-diene-3,17-dione + 2 reduced [2Fe-2S]-[ferredoxin] + O2 + 2 H(+) = 9alpha-hydroxyandrosta-1,4-diene-3,17-dione + 2 oxidized [2Fe-2S]-[ferredoxin] + H2O. Its function is as follows. May be involved in the degradation of cholic acid, a steroid acid found predominantly in the bile. In vitro, catalyzes the introduction of a 9alpha-hydroxyl moiety into the ring B of 3-ketosteroid substrates such as 1,4-androstadiene-3,17-dione (ADD), 4-androstene-3,17-dione (AD), 4-androstene-17beta-ol-3-one (testosterone), 4-pregnene-3,20-dione (progesterone), 3-oxo-23,24-bisnorcholesta-4-en-22-oate (4-BNC), 23,24-bisnorcholesta-4-ene-22-oate, 3-oxo-23,24-bisnorcholaesta-1,4-dien-22-oate (1,4-BNC), 23,24-bisnorcholesta-1,4-diene-22-oate and 3-oxo-23,24-bisnorcholesta-1,4-dien-22-oyl-coenzyme A thioester (1,4-BNC-CoA). KshA1 has the highest specificity for steroids possessing an isopropionyl side chain at C17. This Rhodococcus rhodochrous protein is 3-ketosteroid-9-alpha-monooxygenase, oxygenase component.